We begin with the raw amino-acid sequence, 220 residues long: Deep-sea actinoporin Cjtox I (220 aa).

The first 19 residues, 1–19, serve as a signal peptide directing secretion; sequence MNRLIILCLVAATIYSTIA. The propeptide occupies 20–42; it reads LPMKEDISNEERPTSVNEKPVKK. Ser96, Val128, Ser146, Pro148, Tyr174, Tyr178, and Tyr179 together coordinate phosphocholine. The tract at residues 146 to 161 is trp-rich region, which is important for the binding to lipid membrane; it reads SVPYDYNWYSNWWNIK. The Cell attachment site, crucial for protein stability signature appears at 185 to 187; it reads KGN.

The protein belongs to the actinoporin family. Sea anemone subfamily. Octamer or nonamer in membranes. Monomer in the soluble state. As to expression, expressed in tentacles.

It is found in the secreted. Its subcellular location is the nematocyst. It localises to the target cell membrane. Functionally, probably acts in predation. Pore-forming protein that forms cations-selective hydrophilic pores of around 1 nm and causes cytolysis. Pore formation is a multi-step process that involves specific recognition of membrane sphingomyelin (but neither cholesterol nor phosphatidylcholine) using aromatic rich region and adjacent phosphocholine (POC) binding site, firm binding to the membrane (mainly driven by hydrophobic interactions) accompanied by the transfer of the N-terminal region to the lipid-water interface and finally pore formation after oligomerization of monomers. Shows hemolytic activity on equine erythrocytes. Hemolysis is moderately inhibited in presence of sphingomyelin, suggesting that this protein targets sphingomyelin. The sequence is that of Deep-sea actinoporin Cjtox I from Cribrinopsis japonica (Deep-sea anemone).